Consider the following 418-residue polypeptide: Calreticulin (418 aa).

The signal sequence occupies residues 1–17 (MLLPVPLLLGLLGLAAA). The tract at residues 18–197 (EPVVYFKEQF…NSQVESGSLE (180 aa)) is N-domain. Residue Gln-26 coordinates Ca(2+). Lys-48 carries the N6-acetyllysine modification. Residues Lys-62 and Lys-64 each coordinate Ca(2+). Lys-64 is subject to N6-(2-hydroxyisobutyryl)lysine. Residues Cys-105 and Cys-137 are joined by a disulfide bond. An alpha-D-glucoside-binding residues include Tyr-109, Lys-111, Tyr-128, and Asp-135. An N6-acetyllysine modification is found at Lys-159. Residues 191–202 (VESGSLEDDWDF) form a 1-1 repeat. Residues 191–255 (VESGSLEDDW…DAKKPEDWDE (65 aa)) form a 4 X approximate repeats region. The disordered stretch occupies residues 193-277 (SGSLEDDWDF…NPEYKGEWKP (85 aa)). A P-domain region spans residues 198 to 308 (DDWDFLPPKK…YSPDANIYAY (111 aa)). The span at 207–251 (KIKDPDASKPEDWDERAKIDDPTDSKPEDWDKPEHIPDPDAKKPE) shows a compositional bias: basic and acidic residues. Residue Lys-209 is modified to N6-acetyllysine. 6 consecutive repeat copies span residues 210–221 (DPDASKPEDWDE), 227–238 (DPTDSKPEDWDK), 244–255 (DPDAKKPEDWDE), 259–269 (GEWEPPVIQNP), 273–283 (GEWKPRQIDNP), and 287–297 (GTWIHPEIDNP). An interaction with PPIB region spans residues 237–270 (DKPEHIPDPDAKKPEDWDEEMDGEWEPPVIQNPE). The segment covering 252 to 261 (DWDEEMDGEW) has biased composition (acidic residues). Positions 259-297 (GEWEPPVIQNPEYKGEWKPRQIDNPDYKGTWIHPEIDNP) are 3 X approximate repeats. A C-domain region spans residues 309–418 (DSFAVLGLDL…AAAGQAKDEL (110 aa)). Asp-317 is an an alpha-D-glucoside binding site. Asp-328 lines the Ca(2+) pocket. The interval 349-418 (VTKTAEKQMK…AAAGQAKDEL (70 aa)) is disordered. Residues 352 to 379 (TAEKQMKDKQDEEQRLKEEEEEKKRKEE) are compositionally biased toward basic and acidic residues. A compositionally biased stretch (acidic residues) spans 380 to 409 (EEAEEDEEDKDDKEDEDEDEEDKDEEEEEA). Residues 415–418 (KDEL) carry the Prevents secretion from ER motif.

Belongs to the calreticulin family. Monomer. Component of an EIF2 complex at least composed of CELF1/CUGBP1, CALR, CALR3, EIF2S1, EIF2S2, HSP90B1 and HSPA5. Interacts with PDIA3/ERp57 and SPACA9. Interacts with TRIM21. Interacts with NR3C1. Interacts with PPIB. Interacts (via P-domain) with PDIA5. Interacts with CLCC1.

It localises to the endoplasmic reticulum lumen. It is found in the cytoplasm. The protein localises to the cytosol. The protein resides in the secreted. Its subcellular location is the extracellular space. It localises to the extracellular matrix. It is found in the cell surface. The protein localises to the sarcoplasmic reticulum lumen. The protein resides in the cytoplasmic vesicle. Its subcellular location is the secretory vesicle. It localises to the cortical granule. It is found in the cytolytic granule. Its function is as follows. Calcium-binding chaperone that promotes folding, oligomeric assembly and quality control in the endoplasmic reticulum (ER) via the calreticulin/calnexin cycle. This lectin interacts transiently with almost all of the monoglucosylated glycoproteins that are synthesized in the ER. Interacts with the DNA-binding domain of NR3C1 and mediates its nuclear export. Involved in maternal gene expression regulation. May participate in oocyte maturation via the regulation of calcium homeostasis. Present in the cortical granules of non-activated oocytes, is exocytosed during the cortical reaction in response to oocyte activation and might participate in the block to polyspermy. This Oryctolagus cuniculus (Rabbit) protein is Calreticulin (CALR).